A 303-amino-acid chain; its full sequence is Serine/threonine-protein phosphatase PP-X homolog 2 (303 aa).

Mn(2+)-binding residues include Asp51, His53, Asp79, and Asn111. His112 functions as the Proton donor in the catalytic mechanism. Positions 161 and 235 each coordinate Mn(2+).

Belongs to the PPP phosphatase family. PP-4 (PP-X) subfamily. Requires Mn(2+) as cofactor.

The catalysed reaction is O-phospho-L-seryl-[protein] + H2O = L-seryl-[protein] + phosphate. The enzyme catalyses O-phospho-L-threonyl-[protein] + H2O = L-threonyl-[protein] + phosphate. The sequence is that of Serine/threonine-protein phosphatase PP-X homolog 2 (Ppx2) from Paramecium tetraurelia.